A 288-amino-acid polypeptide reads, in one-letter code: Ankyrin repeat and SOCS box protein 8 (288 aa).

At Ser-17 the chain carries Phosphoserine. ANK repeat units lie at residues 52 to 81 (GTLKPLHCACMVSDADCVELLLEKGAEVNA), 85 to 113 (YNRTVLHYAAEKDEACVEVLLEYGANPNA), 117 to 146 (NRDTPLHWAAFKNNAECVRALLESGASVNA), and 150 to 179 (NNDTPLSWAAMKGNLESVSILLDYGAEVRV). The 54-residue stretch at 235 to 288 (QLCEKLTVLCSAPGTLKTLARYAVRRSLGLQYLPDAVKGLPLPASLKEYLLLLE) folds into the SOCS box domain.

The protein belongs to the ankyrin SOCS box (ASB) family. Interacts with TBK1; this interaction promotes TBK1 proteasomal degradation. In terms of processing, phosphorylated by TBK1.

The protein resides in the cytoplasm. It participates in protein modification; protein ubiquitination. May be a substrate-recognition component of a SCF-like ECS (Elongin-Cullin-SOCS-box protein) E3 ubiquitin-protein ligase complex which mediates the ubiquitination and subsequent proteasomal degradation of target proteins. Inhibits IFN-beta production through the IRF3 signaling pathway by targeting TBK1 via 'Lys-48'-linked ubiquitination, leading to its proteasomal degradation. The protein is Ankyrin repeat and SOCS box protein 8 (ASB8) of Macaca fascicularis (Crab-eating macaque).